A 1578-amino-acid polypeptide reads, in one-letter code: Pentafunctional AROM polypeptide (1578 aa).

Residues 1–384 (MTGPTKISIL…YEPRASVVPN (384 aa)) form a 3-dehydroquinate synthase region. NAD(+)-binding positions include 44 to 46 (DTN), 81 to 84 (EVSK), 114 to 116 (GGV), and D119. R130 is a 7-phospho-2-dehydro-3-deoxy-D-arabino-heptonate binding site. 139 to 140 (TT) provides a ligand contact to NAD(+). 7-phospho-2-dehydro-3-deoxy-D-arabino-heptonate contacts are provided by D146 and K152. K161 provides a ligand contact to NAD(+). Position 162 (N162) interacts with 7-phospho-2-dehydro-3-deoxy-D-arabino-heptonate. NAD(+)-binding positions include 179–182 (FLET) and N190. E194 contacts Zn(2+). 7-phospho-2-dehydro-3-deoxy-D-arabino-heptonate is bound by residues 194–197 (EVIK) and K250. Residue E260 is the Proton acceptor; for 3-dehydroquinate synthase activity of the active site. 7-phospho-2-dehydro-3-deoxy-D-arabino-heptonate-binding positions include 264 to 268 (RNLLN) and H271. Residue H271 participates in Zn(2+) binding. H275 (proton acceptor; for 3-dehydroquinate synthase activity) is an active-site residue. The 7-phospho-2-dehydro-3-deoxy-D-arabino-heptonate site is built by H287 and K356. A Zn(2+)-binding site is contributed by H287. Positions 397–842 (VYPGVSPASE…WDTLRQKFAV (446 aa)) are EPSP synthase. Catalysis depends on C824, which acts as the For EPSP synthase activity. Residues 864–1055 (SASVFIIGMR…KKKQHSFFVS (192 aa)) form a shikimate kinase region. 871–878 (GMRGAGKT) contributes to the ATP binding site. Residues 1056–1276 (LTLPDVRGAD…AAPGQLSATD (221 aa)) are 3-dehydroquinase. The active-site Proton acceptor; for 3-dehydroquinate dehydratase activity is H1179. K1207 (schiff-base intermediate with substrate; for 3-dehydroquinate dehydratase activity) is an active-site residue. Residues 1289-1578 (KKRFALFGSP…YERARAIVLG (290 aa)) form a shikimate dehydrogenase region.

It in the N-terminal section; belongs to the sugar phosphate cyclases superfamily. Dehydroquinate synthase family. This sequence in the 2nd section; belongs to the EPSP synthase family. The protein in the 3rd section; belongs to the shikimate kinase family. In the 4th section; belongs to the type-I 3-dehydroquinase family. It in the C-terminal section; belongs to the shikimate dehydrogenase family. As to quaternary structure, homodimer. Requires Zn(2+) as cofactor.

The protein resides in the cytoplasm. It catalyses the reaction 7-phospho-2-dehydro-3-deoxy-D-arabino-heptonate = 3-dehydroquinate + phosphate. The catalysed reaction is 3-dehydroquinate = 3-dehydroshikimate + H2O. It carries out the reaction shikimate + NADP(+) = 3-dehydroshikimate + NADPH + H(+). The enzyme catalyses shikimate + ATP = 3-phosphoshikimate + ADP + H(+). It catalyses the reaction 3-phosphoshikimate + phosphoenolpyruvate = 5-O-(1-carboxyvinyl)-3-phosphoshikimate + phosphate. It participates in metabolic intermediate biosynthesis; chorismate biosynthesis; chorismate from D-erythrose 4-phosphate and phosphoenolpyruvate: step 2/7. The protein operates within metabolic intermediate biosynthesis; chorismate biosynthesis; chorismate from D-erythrose 4-phosphate and phosphoenolpyruvate: step 3/7. It functions in the pathway metabolic intermediate biosynthesis; chorismate biosynthesis; chorismate from D-erythrose 4-phosphate and phosphoenolpyruvate: step 4/7. Its pathway is metabolic intermediate biosynthesis; chorismate biosynthesis; chorismate from D-erythrose 4-phosphate and phosphoenolpyruvate: step 5/7. It participates in metabolic intermediate biosynthesis; chorismate biosynthesis; chorismate from D-erythrose 4-phosphate and phosphoenolpyruvate: step 6/7. Its function is as follows. The AROM polypeptide catalyzes 5 consecutive enzymatic reactions in prechorismate polyaromatic amino acid biosynthesis. The protein is Pentafunctional AROM polypeptide of Neosartorya fischeri (strain ATCC 1020 / DSM 3700 / CBS 544.65 / FGSC A1164 / JCM 1740 / NRRL 181 / WB 181) (Aspergillus fischerianus).